The primary structure comprises 72 residues: Translation initiation factor IF-1 (72 aa).

The 72-residue stretch at 1 to 72 (MAKEDVIEVE…NRGRIVYRYK (72 aa)) folds into the S1-like domain.

This sequence belongs to the IF-1 family. As to quaternary structure, component of the 30S ribosomal translation pre-initiation complex which assembles on the 30S ribosome in the order IF-2 and IF-3, IF-1 and N-formylmethionyl-tRNA(fMet); mRNA recruitment can occur at any time during PIC assembly.

It localises to the cytoplasm. Functionally, one of the essential components for the initiation of protein synthesis. Stabilizes the binding of IF-2 and IF-3 on the 30S subunit to which N-formylmethionyl-tRNA(fMet) subsequently binds. Helps modulate mRNA selection, yielding the 30S pre-initiation complex (PIC). Upon addition of the 50S ribosomal subunit IF-1, IF-2 and IF-3 are released leaving the mature 70S translation initiation complex. The sequence is that of Translation initiation factor IF-1 from Moorella thermoacetica (strain ATCC 39073 / JCM 9320).